We begin with the raw amino-acid sequence, 222 residues long: Uridine diphosphate glucose pyrophosphatase NUDT14 (222 aa).

One can recognise a Nudix hydrolase domain in the interval lysine 38–phenylalanine 206. Positions proline 111–tyrosine 129 match the Nudix box motif.

The protein belongs to the Nudix hydrolase family. In terms of assembly, homodimer. Mg(2+) serves as cofactor.

It localises to the cytoplasm. It catalyses the reaction UDP-sugar + H2O = UMP + alpha-D-aldose 1-phosphate.. In terms of biological role, hydrolyzes UDP-glucose to glucose 1-phosphate and UMP and ADP-ribose to ribose 5-phosphate and AMP. The physiological substrate is probably UDP-glucose. Poor activity on other substrates such as ADP-glucose, CDP-glucose, GDP-glucose and GDP-mannose. This chain is Uridine diphosphate glucose pyrophosphatase NUDT14 (NUDT14), found in Homo sapiens (Human).